A 91-amino-acid chain; its full sequence is Large ribosomal subunit protein uL23c (91 aa).

This sequence belongs to the universal ribosomal protein uL23 family. In terms of assembly, part of the 50S ribosomal subunit.

It is found in the plastid. It localises to the chloroplast. In terms of biological role, binds to 23S rRNA. In Marchantia polymorpha (Common liverwort), this protein is Large ribosomal subunit protein uL23c (rpl23).